The primary structure comprises 37 residues: Lambda-hexatoxin-Hv1c (37 aa).

Disulfide bonds link Cys-3–Cys-17, Cys-10–Cys-22, Cys-13–Cys-14, and Cys-16–Cys-32.

This sequence belongs to the neurotoxin 11 (kappa toxin) family. Expressed by the venom gland.

The protein resides in the secreted. Functionally, this excitatory toxin inhibits insect calcium-activated potassium (KCa) channels (Slo-type). Pan-neuronal expression in Drosophila is lethal but flies engineered to express the toxin only in clock neurons have defects in circadian rhythm but a normal lifespan. The sequence is that of Lambda-hexatoxin-Hv1c from Hadronyche versuta (Blue mountains funnel-web spider).